Consider the following 738-residue polypeptide: Conserved oligomeric Golgi complex subunit 4 (738 aa).

Belongs to the COG4 family. Component of the conserved oligomeric Golgi complex which is composed of eight different subunits and is required for normal Golgi morphology and localization. Interacts with COG2 and COG3.

The protein localises to the golgi apparatus membrane. Its function is as follows. Required for normal Golgi function. The protein is Conserved oligomeric Golgi complex subunit 4 of Arabidopsis thaliana (Mouse-ear cress).